The chain runs to 389 residues: 26S proteasome regulatory subunit 6B homolog (389 aa).

Residue 175–182 (GPPGTGKT) coordinates ATP.

It belongs to the AAA ATPase family.

The protein resides in the cytoplasm. It is found in the nucleus. Its function is as follows. The 26S proteasome is involved in the ATP-dependent degradation of ubiquitinated proteins. The regulatory (or ATPase) complex confers ATP dependency and substrate specificity to the 26S complex. The polypeptide is 26S proteasome regulatory subunit 6B homolog (rpt3) (Schizosaccharomyces pombe (strain 972 / ATCC 24843) (Fission yeast)).